The primary structure comprises 258 residues: Tryptophan synthase alpha chain (258 aa).

Residues Glu52 and Asp63 each act as proton acceptor in the active site.

The protein belongs to the TrpA family. In terms of assembly, tetramer of two alpha and two beta chains.

The catalysed reaction is (1S,2R)-1-C-(indol-3-yl)glycerol 3-phosphate + L-serine = D-glyceraldehyde 3-phosphate + L-tryptophan + H2O. The protein operates within amino-acid biosynthesis; L-tryptophan biosynthesis; L-tryptophan from chorismate: step 5/5. The alpha subunit is responsible for the aldol cleavage of indoleglycerol phosphate to indole and glyceraldehyde 3-phosphate. This is Tryptophan synthase alpha chain from Streptococcus pneumoniae (strain 70585).